Reading from the N-terminus, the 23-residue chain is Cytochrome c3-1 (23 aa).

The disordered stretch occupies residues 1–23 (AAPKAPADGLKMDKTKQXVVFNH). Histidine 23 contacts heme.

In terms of processing, binds 4 heme groups per subunit.

It is found in the periplasm. Participates in sulfate respiration coupled with phosphorylation by transferring electrons from the enzyme dehydrogenase to ferredoxin. This chain is Cytochrome c3-1, found in Nitratidesulfovibrio vulgaris (Desulfovibrio vulgaris).